The chain runs to 1430 residues: Transport and Golgi organization protein 1 (1430 aa).

The first 34 residues, 1–34 (MRLTNEKATMQPQLSDLALVLGLLICCLPTLTWA), serve as a signal peptide directing secretion. Topologically, residues 35 to 796 (ATLSDKRLCA…ADKLVDHSQL (762 aa)) are extracellular. The SH3 domain occupies 50-112 (QIISMGIAKI…NKDFIMEKKI (63 aa)). 5 disordered regions span residues 253 to 272 (QEEP…PPLP), 284 to 303 (DFDY…SQDN), 318 to 362 (ESIE…SLPT), 445 to 524 (SDAE…DQQK), and 568 to 673 (EEAE…TDNH). Residues 284–296 (DFDYGDDETDDDS) are compositionally biased toward acidic residues. Basic and acidic residues-rich tracts occupy residues 331-357 (KKTD…KQED), 497-524 (LQEE…DQQK), and 568-588 (EEAE…RSSE). The stretch at 494–620 (YKQLQEEQEK…QSNEIVDNNN (127 aa)) forms a coiled coil. Residues 594 to 621 (LSVQEANMQQLNDSVDSQSNEIVDNNNR) show a composition bias toward polar residues. Over residues 640–651 (HPSTASHTTPTP) the composition is skewed to low complexity. A helical transmembrane segment spans residues 797–817 (LLCVVIAAISSLFFMFAYYCF). Residues 818-1430 (CNSSQEGALL…SATSRPYSEV (613 aa)) are Cytoplasmic-facing. 2 positions are modified to phosphoserine: Ser865 and Ser868. Residues 869-1245 (NDMVADLKKQ…SLRRKLTTMA (377 aa)) are a coiled coil. A compositionally biased stretch (low complexity) spans 1105 to 1114 (SQLQQSSQDV). 2 disordered regions span residues 1105–1126 (SQLQ…QSER) and 1312–1430 (LPPT…YSEV). Basic and acidic residues predominate over residues 1115 to 1126 (EQLKQDFNQSER). Over residues 1321–1334 (RPPPLGRMRSPPPS) the composition is skewed to pro residues. Residues 1336–1346 (RGDRDRERYSD) show a composition bias toward basic and acidic residues. Residues Ser1345 and Ser1348 each carry the phosphoserine modification. Acidic residues predominate over residues 1348–1361 (SDYDDYDDDEEDDR). Residues 1364–1380 (DRRRRHSGSWGRRHRGS) show a composition bias toward basic residues. Over residues 1387-1402 (TYRSLSPSDSRYNYND) the composition is skewed to polar residues. Ser1390 and Ser1392 each carry phosphoserine. Positions 1408–1417 (SPPPSPPPVP) are enriched in pro residues. Polar residues predominate over residues 1420–1430 (RSATSRPYSEV).

It belongs to the MIA/OTOR family. Tango1 subfamily.

Its subcellular location is the golgi apparatus membrane. The protein resides in the golgi apparatus. It localises to the trans-Golgi network. Required for protein secretion. May participate in cargo loading by binding to COPII coat subunits and guiding SH3-bound proteins into a growing carrier. At basal transitional ER sites in follicle epithelial cells, mediates the exit of basal membrane protein such as vkg, LanB1 and Trol, from the endoplasmic reticulum (ER) to basal Golgi clusters. This is Transport and Golgi organization protein 1 from Drosophila melanogaster (Fruit fly).